The chain runs to 382 residues: Mannitol-1-phosphate 5-dehydrogenase (382 aa).

3–14 (ALHFGAGNIGRG) contacts NAD(+).

Belongs to the mannitol dehydrogenase family.

It catalyses the reaction D-mannitol 1-phosphate + NAD(+) = beta-D-fructose 6-phosphate + NADH + H(+). The sequence is that of Mannitol-1-phosphate 5-dehydrogenase from Salmonella dublin (strain CT_02021853).